Consider the following 77-residue polypeptide: Conotoxin Bt6.6 (77 aa).

The signal sequence occupies residues Met-1–Ala-19. A propeptide spanning residues Leu-20 to Xaa-38 is cleaved from the precursor. 3 disulfides stabilise this stretch: Cys-51-Cys-65, Cys-58-Cys-69, and Cys-64-Cys-74.

Belongs to the conotoxin O2 superfamily. In terms of tissue distribution, expressed by the venom duct.

The protein resides in the secreted. The chain is Conotoxin Bt6.6 from Conus betulinus (Beech cone).